The primary structure comprises 144 residues: Large ribosomal subunit protein uL15 (144 aa).

The interval 1 to 58 (MHLNTLSPAPGSHKARKRCGRGIGSGIGKTGGRGHKGQKSRSGGSVRPGFEGGQMPLK) is disordered. Residues 21-31 (RGIGSGIGKTG) are compositionally biased toward gly residues.

This sequence belongs to the universal ribosomal protein uL15 family. As to quaternary structure, part of the 50S ribosomal subunit.

Functionally, binds to the 23S rRNA. In Colwellia psychrerythraea (strain 34H / ATCC BAA-681) (Vibrio psychroerythus), this protein is Large ribosomal subunit protein uL15.